The following is a 547-amino-acid chain: Chaperonin GroEL (547 aa).

ATP is bound by residues 29–32, Lys-50, 86–90, Gly-414, 477–479, and Asp-493; these read TMGP, DGTTT, and NAA.

It belongs to the chaperonin (HSP60) family. As to quaternary structure, forms a cylinder of 14 subunits composed of two heptameric rings stacked back-to-back. Interacts with the co-chaperonin GroES.

It localises to the cytoplasm. The catalysed reaction is ATP + H2O + a folded polypeptide = ADP + phosphate + an unfolded polypeptide.. Functionally, together with its co-chaperonin GroES, plays an essential role in assisting protein folding. The GroEL-GroES system forms a nano-cage that allows encapsulation of the non-native substrate proteins and provides a physical environment optimized to promote and accelerate protein folding. This is Chaperonin GroEL from Campylobacter rectus (Wolinella recta).